Here is a 466-residue protein sequence, read N- to C-terminus: Asparagine--tRNA ligase (466 aa).

Belongs to the class-II aminoacyl-tRNA synthetase family. Homodimer.

It localises to the cytoplasm. It carries out the reaction tRNA(Asn) + L-asparagine + ATP = L-asparaginyl-tRNA(Asn) + AMP + diphosphate + H(+). The chain is Asparagine--tRNA ligase from Shewanella amazonensis (strain ATCC BAA-1098 / SB2B).